The chain runs to 109 residues: Fluoride-specific ion channel FluC 1 (109 aa).

4 helical membrane passes run 1–21 (MVIVYLAIACGLGALVRYFFS), 29–49 (LPLGTLIANLLGCFLIGVFYN), 55–75 (EVYAILATGFCGGLTTFSTLN), and 87–107 (VFYSYLTLTYIGGLVAIFLGI). Positions 66 and 69 each coordinate Na(+).

It belongs to the fluoride channel Fluc/FEX (TC 1.A.43) family.

The protein resides in the cell membrane. The enzyme catalyses fluoride(in) = fluoride(out). Its activity is regulated as follows. Na(+) is not transported, but it plays an essential structural role and its presence is essential for fluoride channel function. Functionally, fluoride-specific ion channel. Important for reducing fluoride concentration in the cell, thus reducing its toxicity. This is Fluoride-specific ion channel FluC 1 from Streptococcus pneumoniae serotype 4 (strain ATCC BAA-334 / TIGR4).